Consider the following 207-residue polypeptide: Outer-membrane lipoprotein LolB (207 aa).

The first 21 residues, 1–21, serve as a signal peptide directing secretion; sequence MPMRKRHFYRLLPLASLLLAA. Cys22 carries N-palmitoyl cysteine lipidation. Cys22 carries the S-diacylglycerol cysteine lipid modification.

The protein belongs to the LolB family. As to quaternary structure, monomer.

It is found in the cell outer membrane. Functionally, plays a critical role in the incorporation of lipoproteins in the outer membrane after they are released by the LolA protein. The chain is Outer-membrane lipoprotein LolB from Yersinia pestis bv. Antiqua (strain Antiqua).